Consider the following 399-residue polypeptide: MAQRAFPNPYADYNKSLAENYFDSTGRLTPEFSHRLTNKIRELLQQMERGLKSADPRDGTGYTGWAGIAVLYLHLHNVFGDPAYLQMAHSYVKQSLNCLSRRSITFLCGDAGPLAVAAVLYHKMNSEKQAEECITRLIHLNKIDPHVPNEMLYGRIGYIFALLFVNKNFGEEKIPQSHIQQICENILTSGENLSRKRNLAAKSPLMYEWYQEYYVGAAHGLAGIYYYLMQPSLQVNQGKLHSLVKPSVDFVCRLKFPSGNYPPCLDDTRDLLVHWCHGAPGVIYMLIQAYKVFKEERYLCDAQQCADVIWQYGLLKKGYGLCHGAAGNAYAFLALYNLTQDLKYLYRACKFAEWCLDYGEHGCRTADTPFSLFEGMAGTIYFLADLLVPTKAKFPAFEL.

Residue alanine 2 is modified to N-acetylalanine. The residue at position 142 (lysine 142) is an N6-acetyllysine. Residue cysteine 276 coordinates Zn(2+). Lysine 317 contacts glutathione. The Zn(2+) site is built by cysteine 322 and histidine 323. 364–367 (RTAD) serves as a coordination point for glutathione.

The protein belongs to the LanC-like protein family. Interacts with the C-terminal of STOM. Interacts with the EPS8 SH3 domain. Interaction with EPS8 is inhibited by glutathione binding. In terms of tissue distribution, detected in spinal cord (at protein level). Ubiquitous. Strongly expressed in brain, testis, alveolar macrophages and epithelial cells of the lung, kidney and intestine. Expression in brain increases during the first postnatal month and remaining high in adult.

The protein resides in the cytoplasm. Its subcellular location is the cell membrane. It carries out the reaction RX + glutathione = an S-substituted glutathione + a halide anion + H(+). It catalyses the reaction 1-chloro-2,4-dinitrobenzene + glutathione = 2,4-dinitrophenyl-S-glutathione + chloride + H(+). Functionally, functions as a glutathione transferase. Catalyzes conjugation of the glutathione (GSH) to artificial substrates 1-chloro-2,4-dinitrobenzene (CDNB) and p-nitrophenyl acetate. Mitigates neuronal oxidative stress during normal postnatal development and in response to oxidative stresses probably through GSH antioxidant defense mechanism. May play a role in EPS8 signaling. Binds glutathione. The polypeptide is Glutathione S-transferase LANCL1 (Mus musculus (Mouse)).